The primary structure comprises 336 residues: Dihydroorotate dehydrogenase (quinone) (336 aa).

FMN is bound by residues 62-66 (AGLDK) and Thr-86. Lys-66 is a binding site for substrate. Substrate is bound at residue 111-115 (NRMGF). FMN contacts are provided by Asn-139 and Asn-172. Asn-172 serves as a coordination point for substrate. Ser-175 (nucleophile) is an active-site residue. Asn-177 lines the substrate pocket. FMN contacts are provided by Lys-217 and Thr-245. Residue 246 to 247 (NT) coordinates substrate. Residues Gly-268, Gly-297, and 318–319 (YS) each bind FMN.

Belongs to the dihydroorotate dehydrogenase family. Type 2 subfamily. As to quaternary structure, monomer. It depends on FMN as a cofactor.

It localises to the cell membrane. The catalysed reaction is (S)-dihydroorotate + a quinone = orotate + a quinol. It functions in the pathway pyrimidine metabolism; UMP biosynthesis via de novo pathway; orotate from (S)-dihydroorotate (quinone route): step 1/1. Functionally, catalyzes the conversion of dihydroorotate to orotate with quinone as electron acceptor. The chain is Dihydroorotate dehydrogenase (quinone) from Vibrio vulnificus (strain YJ016).